Reading from the N-terminus, the 364-residue chain is MEIRYTPKELTKLPRTVEYKNKSVYMINQRLLPKEFKVEKFSKVEEVAEAIKNMTVRGAPAIGAAAGFGLALYAETSKAKTKEEFLDGFEKAYEILKNTRPTAVNLFWALNRIKKLVEEHSEDPLDEIKRLIVQEAYKIADEDVEANLRMGHYGAEVLPEGNILTHCNAGSLATVHLGTVGSVVRVMHKDGSLKLLWLDETRPVLQGARLSAWEYSYDGLNVKLIADNAAAFVMQQGFVDAIIVGADRIVANGDFANKIGTYMLAVLAREHGIPFFAVAPLSSIDMELKSGKDIPIEERSPEEVLTCGGCRIAPDVPVYNPAFDVTPHKYLTGIITDRGVVWPPFKRNLKKLFEVNKSGGDEAV.

Residues Arg57 to Ala59, Arg100, and Gln206 each bind substrate. The active-site Proton donor is the Asp247. Asn257 to Lys258 is a binding site for substrate.

Belongs to the eIF-2B alpha/beta/delta subunits family. MtnA subfamily.

It carries out the reaction 5-(methylsulfanyl)-alpha-D-ribose 1-phosphate = 5-(methylsulfanyl)-D-ribulose 1-phosphate. Catalyzes the interconversion of methylthioribose-1-phosphate (MTR-1-P) into methylthioribulose-1-phosphate (MTRu-1-P). This chain is Putative methylthioribose-1-phosphate isomerase, found in Pyrococcus horikoshii (strain ATCC 700860 / DSM 12428 / JCM 9974 / NBRC 100139 / OT-3).